The sequence spans 236 residues: Purine nucleoside phosphorylase DeoD-type (236 aa).

An a purine D-ribonucleoside-binding site is contributed by His-5. Residues Gly-21, Arg-25, Arg-44, and 88–91 each bind phosphate; that span reads RVGT. A purine D-ribonucleoside is bound by residues 180–182 and 204–205; these read EME and SD. Asp-205 acts as the Proton donor in catalysis.

This sequence belongs to the PNP/UDP phosphorylase family. In terms of assembly, homohexamer; trimer of homodimers.

It carries out the reaction a purine D-ribonucleoside + phosphate = a purine nucleobase + alpha-D-ribose 1-phosphate. The enzyme catalyses a purine 2'-deoxy-D-ribonucleoside + phosphate = a purine nucleobase + 2-deoxy-alpha-D-ribose 1-phosphate. In terms of biological role, catalyzes the reversible phosphorolytic breakdown of the N-glycosidic bond in the beta-(deoxy)ribonucleoside molecules, with the formation of the corresponding free purine bases and pentose-1-phosphate. The protein is Purine nucleoside phosphorylase DeoD-type of Shewanella denitrificans (strain OS217 / ATCC BAA-1090 / DSM 15013).